The chain runs to 54 residues: Large ribosomal subunit protein bL33A (54 aa).

It belongs to the bacterial ribosomal protein bL33 family.

The sequence is that of Large ribosomal subunit protein bL33A from Saccharopolyspora erythraea (strain ATCC 11635 / DSM 40517 / JCM 4748 / NBRC 13426 / NCIMB 8594 / NRRL 2338).